The primary structure comprises 528 residues: UDP-glucuronosyltransferase 2B19 (528 aa).

An N-terminal signal peptide occupies residues 1–21; sequence MSMKWTSALLLIQLSCYLSFG. N6-succinyllysine is present on Lys-135. N-linked (GlcNAc...) asparagine glycosylation occurs at Asn-315. Residues 493 to 513 form a helical membrane-spanning segment; it reads VIGFLLACVATVIFIITKCLF.

It belongs to the UDP-glycosyltransferase family. In terms of tissue distribution, expressed in liver, ovary, prostate, colon, kidney, pancreas, brain, cerebellum, mammary gland and epididymis. Not expressed in small intestine, spleen, bladder, adrenal gland and testis.

It is found in the microsome membrane. It localises to the endoplasmic reticulum membrane. It carries out the reaction glucuronate acceptor + UDP-alpha-D-glucuronate = acceptor beta-D-glucuronoside + UDP + H(+). In terms of biological role, UDPGT is of major importance in the conjugation and subsequent elimination of potentially toxic xenobiotics and endogenous compounds. This isozyme displays activity toward several classes of xenobiotic substrates: eugenol, 4-methyllumbelliferone, p-nitrophenol, 1-naphthol, p,p'-biphenol, naringenin and o,o'-biphenol. Active also on 3a-hydroxy and 17b-hydroxy positions of steroids. Functionally, contributes to the formation of androgen glucuronide in extrahepatic steroid target tissues such as the prostate. This is UDP-glucuronosyltransferase 2B19 (UGT2B19) from Macaca fascicularis (Crab-eating macaque).